A 543-amino-acid chain; its full sequence is Steroid receptor seven-up, isoforms B/C (543 aa).

The segment at 38-191 is disordered; sequence PPHSAWHEPP…HSQSSNSGSQ (154 aa). Residues 56-68 show a composition bias toward low complexity; the sequence is AASAGPGTTTGSV. The segment covering 83-101 has biased composition (polar residues); the sequence is QQSAVIKQDLSCPSLNQAG. Over residues 122–141 the composition is skewed to gly residues; that stretch reads GSAGGHHSGSGSGSGSGVNP. Polar residues predominate over residues 158–170; sequence MLTSIKGQPTGCG. The segment covering 171 to 191 has biased composition (low complexity); the sequence is STTPSSQANSSHSQSSNSGSQ. Residues 197-272 constitute a DNA-binding region (nuclear receptor); the sequence is NIECVVCGDK…MGMRREAVQR (76 aa). NR C4-type zinc fingers lie at residues 200–220 and 236–260; these read CVVC…CEGC and CRGS…LKKC. Residues 307-532 enclose the NR LBD domain; that stretch reads YLSSYISLLL…TLIRDMLLSG (226 aa).

Belongs to the nuclear hormone receptor family. NR2 subfamily. As to expression, expressed in several embryonic tissues; dorsal vessel, oenocyte and fat body. CNS expression is dynamic and confined to temporally restricted subsections of the NB lineage; expressed in many NB and GMCs, but only a small number of neurons.

It is found in the nucleus. Receptor that is required in photoreceptors R1, R3, R4 and R6 during eye development; generation of the ganglion mother cell-2 (GMC-2) fate in the nb7-3 lineage, coinciding with the transition in the expression of HB to KR in the neuroblasts (NBs). The protein is Steroid receptor seven-up, isoforms B/C (svp) of Drosophila melanogaster (Fruit fly).